The sequence spans 790 residues: Nuclear cap-binding protein subunit 1 (790 aa).

The segment at 1–26 (MSRRRHSYENDGGQPHKRRKTSDANE) is disordered. A Nuclear localization signal motif is present at residues 3–20 (RRRHSYENDGGQPHKRRK). Serine 7 bears the Phosphoserine mark. Threonine 21 carries the phosphothreonine modification. Phosphoserine occurs at positions 22 and 201. An MIF4G domain is found at 28–240 (EDHLESLICK…CLWAQIQKLK (213 aa)). Position 204 is an N6-acetyllysine (lysine 204). The stretch at 643 to 713 (STIRKMNKHV…SEQKNLFLVI (71 aa)) forms a coiled coil. The tract at residues 666–685 (LARQHKRRSDDDDRSSDRKD) is disordered. Lysine 684 is covalently cross-linked (Glycyl lysine isopeptide (Lys-Gly) (interchain with G-Cter in SUMO2)). Lysine 698 is modified (N6-acetyllysine).

It belongs to the NCBP1 family. In terms of assembly, component of the nuclear cap-binding complex (CBC), a heterodimer composed of NCBP1/CBP80 and NCBP2/CBP20 that interacts with m7GpppG-capped RNA. Found in a U snRNA export complex containing PHAX/RNUXA, NCBP1/CBP80, NCBP2/CBP20, RAN, XPO1 and m7G-capped RNA. Identified in a IGF2BP1-dependent mRNP granule complex containing untranslated mRNAs. Interacts with PHAX/RNUXA, SRRT/ARS2, EIF4G2, IGF2BP1, HNRNPF, HNRNPH1, KIAA0427/CTIF, PARN, DROSHA, UPF1 and ALYREF/THOC4. May interact with EIF4G1; the interaction is however controversial. The large PER complex involved in the repression of transcriptional termination is composed of at least PER2, CDK9, DDX5, DHX9, NCBP1/CBP80 and POLR2A (active). Component of an alternative nuclear cap-binding complex (CBC) composed of NCBP1/CBP80 and NCBP3. Interacts with METTL3. Interacts with ZFC3H1 in a RNase-insensitive manner. Interacts with MTREX. Interacts with TASOR. Interacts with DHX34; the interaction is RNA-dependent. Interacts with KPNA3. In terms of processing, dephosphorylated at Thr-21 by the PNUTS-PP1 complex during RNA polymerase II transcription pause-release. In terms of tissue distribution, expressed in the spermatogonia, spermatocytes and granular cells within the cerebellum.

The protein localises to the nucleus. It localises to the cytoplasm. Component of the cap-binding complex (CBC), which binds cotranscriptionally to the 5'-cap of pre-mRNAs and is involved in various processes such as pre-mRNA splicing, translation regulation, nonsense-mediated mRNA decay, RNA-mediated gene silencing (RNAi) by microRNAs (miRNAs) and mRNA export. The CBC complex is involved in mRNA export from the nucleus via its interaction with ALYREF/THOC4/ALY, leading to the recruitment of the mRNA export machinery to the 5'-end of mRNA and to mRNA export in a 5' to 3' direction through the nuclear pore. The CBC complex is also involved in mediating U snRNA and intronless mRNAs export from the nucleus. The CBC complex is essential for a pioneer round of mRNA translation, before steady state translation when the CBC complex is replaced by cytoplasmic cap-binding protein eIF4E. The pioneer round of mRNA translation mediated by the CBC complex plays a central role in nonsense-mediated mRNA decay (NMD), NMD only taking place in mRNAs bound to the CBC complex, but not on eIF4E-bound mRNAs. The CBC complex enhances NMD in mRNAs containing at least one exon-junction complex (EJC) via its interaction with UPF1, promoting the interaction between UPF1 and UPF2. The CBC complex is also involved in 'failsafe' NMD, which is independent of the EJC complex, while it does not participate in Staufen-mediated mRNA decay (SMD). During cell proliferation, the CBC complex is also involved in microRNAs (miRNAs) biogenesis via its interaction with SRRT/ARS2 and is required for miRNA-mediated RNA interference. The CBC complex also acts as a negative regulator of PARN, thereby acting as an inhibitor of mRNA deadenylation. In the CBC complex, NCBP1/CBP80 does not bind directly capped RNAs (m7GpppG-capped RNA) but is required to stabilize the movement of the N-terminal loop of NCBP2/CBP20 and lock the CBC into a high affinity cap-binding state with the cap structure. Associates with NCBP3 to form an alternative cap-binding complex (CBC) which plays a key role in mRNA export and is particularly important in cellular stress situations such as virus infections. The conventional CBC with NCBP2 binds both small nuclear RNA (snRNA) and messenger (mRNA) and is involved in their export from the nucleus whereas the alternative CBC with NCBP3 does not bind snRNA and associates only with mRNA thereby playing a role only in mRNA export. NCBP1/CBP80 is required for cell growth and viability. This Mus musculus (Mouse) protein is Nuclear cap-binding protein subunit 1 (Ncbp1).